The chain runs to 369 residues: Anhydro-N-acetylmuramic acid kinase (369 aa).

Residue glycine 12–aspartate 19 coordinates ATP.

Belongs to the anhydro-N-acetylmuramic acid kinase family.

It carries out the reaction 1,6-anhydro-N-acetyl-beta-muramate + ATP + H2O = N-acetyl-D-muramate 6-phosphate + ADP + H(+). Its pathway is amino-sugar metabolism; 1,6-anhydro-N-acetylmuramate degradation. It participates in cell wall biogenesis; peptidoglycan recycling. In terms of biological role, catalyzes the specific phosphorylation of 1,6-anhydro-N-acetylmuramic acid (anhMurNAc) with the simultaneous cleavage of the 1,6-anhydro ring, generating MurNAc-6-P. Is required for the utilization of anhMurNAc either imported from the medium or derived from its own cell wall murein, and thus plays a role in cell wall recycling. This chain is Anhydro-N-acetylmuramic acid kinase, found in Shewanella amazonensis (strain ATCC BAA-1098 / SB2B).